Reading from the N-terminus, the 65-residue chain is Sarcoplasmic/endoplasmic reticulum calcium ATPase regulator ARLN (65 aa).

Met-1 is modified (N-acetylmethionine). The disordered stretch occupies residues 1 to 36 (MEVSQAASGTDGVRERRGSFEAGRRNQDEAPQSGMN). A compositionally biased stretch (basic and acidic residues) spans 12–28 (GVRERRGSFEAGRRNQD). Ser-19 bears the Phosphoserine mark. Residues 44 to 64 (WLDLWLFILFDLALFVFVYLL) form a helical membrane-spanning segment.

Homooligomer. Can also form heterooligomers with other sarcoplasmic/endoplasmic reticulum calcium ATPase (SERCA) regulators ERLN, PLN, SLN and STRIT1/DWORF. Monomer. Interacts as a monomer with ATP2A2/SERCA2; the interaction results in inhibition of ATP2A2 Ca(2+) affinity. In terms of tissue distribution, in the embryo, expressed in heart, epidermal epithelium, salivary gland, brown fat, intestinal epithelium and bladder urothelium.

It is found in the endoplasmic reticulum membrane. In terms of biological role, inhibits the activity of the calcium ATPases ATP2A2/SERCA2 and ATP2A3/SERCA3 by decreasing their apparent affinity for Ca(2+). This Mus musculus (Mouse) protein is Sarcoplasmic/endoplasmic reticulum calcium ATPase regulator ARLN (Arln).